We begin with the raw amino-acid sequence, 614 residues long: Glutamyl-tRNA(Gln) amidotransferase subunit E (614 aa).

This sequence belongs to the GatB/GatE family. GatE subfamily. In terms of assembly, heterodimer of GatD and GatE.

It carries out the reaction L-glutamyl-tRNA(Gln) + L-glutamine + ATP + H2O = L-glutaminyl-tRNA(Gln) + L-glutamate + ADP + phosphate + H(+). Functionally, allows the formation of correctly charged Gln-tRNA(Gln) through the transamidation of misacylated Glu-tRNA(Gln) in organisms which lack glutaminyl-tRNA synthetase. The reaction takes place in the presence of glutamine and ATP through an activated gamma-phospho-Glu-tRNA(Gln). The GatDE system is specific for glutamate and does not act on aspartate. This Methanospirillum hungatei JF-1 (strain ATCC 27890 / DSM 864 / NBRC 100397 / JF-1) protein is Glutamyl-tRNA(Gln) amidotransferase subunit E.